Reading from the N-terminus, the 1335-residue chain is Membrane-associated phosphatidylinositol transfer protein 2 (1335 aa).

Disordered stretches follow at residues 32 to 51 (ETHG…YTDG) and 262 to 341 (EEGP…SEEE). Polar residues predominate over residues 275–286 (KDQASGTTSDPG). Positions 299 to 319 (KQWSTSSKSSRSSKRGASPSR) are enriched in low complexity. A phosphoserine mark is found at S334, S338, S365, and S586. The disordered stretch occupies residues 606–657 (HCSGGSGGGGSGGSSLESSRHLSRSNIDIPRSNGTEDSRRQLPRKRSDSSTY). Gly residues predominate over residues 609–618 (GGSGGGGSGG). The residue at position 630 (S630) is a Phosphoserine. Positions 639 to 653 (GTEDSRRQLPRKRSD) are enriched in basic and acidic residues. Phosphoserine is present on residues S686, S687, and S688. Residues 701-949 (FDFEIADLFL…VSFLLRQVMR (249 aa)) enclose the DDHD domain. R814 carries the post-translational modification Omega-N-methylarginine. Residues 861–880 (ALPPPSPTTQGPRARARQVS) form a disordered region. Position 1263 is a phosphoserine (S1263). A disordered region spans residues 1282-1313 (TISAQPSGPSHRHDRTQTQMDSEQRGQRSMSV). Over residues 1298–1313 (QTQMDSEQRGQRSMSV) the composition is skewed to polar residues.

This sequence belongs to the PtdIns transfer protein family. PI transfer class IIA subfamily. In terms of assembly, interacts with CPNE4 (via VWFA domain). Interacts with PTK2B via its C-terminus. As to expression, detected in retina and in the dentate gyrus of the cerebellum.

It localises to the endomembrane system. The protein localises to the cytoplasm. The protein resides in the cytoskeleton. Functionally, catalyzes the transfer of phosphatidylinositol and phosphatidylcholine between membranes (in vitro). Binds calcium ions. The polypeptide is Membrane-associated phosphatidylinositol transfer protein 2 (Pitpnm2) (Mus musculus (Mouse)).